The primary structure comprises 60 residues: Transcriptional regulator Brz (60 aa).

The segment at 8–52 (CPRCGSDVKMGLPMGATVKSVTAASRQEPTSDTQKVRTVECRNDH) adopts a C4-type; atypical zinc-finger fold.

Belongs to the Brz family.

Activates transcription of bacteriorhodopsin (bop) and phytoene synthase (crtB1). May interact with DNA or RNA via the zinc finger motif. This Halobacterium salinarum (strain ATCC 29341 / DSM 671 / R1) protein is Transcriptional regulator Brz (brz).